The following is a 435-amino-acid chain: Light-independent protochlorophyllide reductase subunit N (435 aa).

Residues Cys-23, Cys-48, and Cys-108 each coordinate [4Fe-4S] cluster.

It belongs to the BchN/ChlN family. In terms of assembly, protochlorophyllide reductase is composed of three subunits; ChlL, ChlN and ChlB. Forms a heterotetramer of two ChlB and two ChlN subunits. The cofactor is [4Fe-4S] cluster.

The protein resides in the plastid. Its subcellular location is the chloroplast. It catalyses the reaction chlorophyllide a + oxidized 2[4Fe-4S]-[ferredoxin] + 2 ADP + 2 phosphate = protochlorophyllide a + reduced 2[4Fe-4S]-[ferredoxin] + 2 ATP + 2 H2O. The protein operates within porphyrin-containing compound metabolism; chlorophyll biosynthesis (light-independent). Functionally, component of the dark-operative protochlorophyllide reductase (DPOR) that uses Mg-ATP and reduced ferredoxin to reduce ring D of protochlorophyllide (Pchlide) to form chlorophyllide a (Chlide). This reaction is light-independent. The NB-protein (ChlN-ChlB) is the catalytic component of the complex. This is Light-independent protochlorophyllide reductase subunit N from Auxenochlorella protothecoides (Green microalga).